The following is a 252-amino-acid chain: MTLVSDHENDDMNPFRVRSRREVIALLRSIGERNQLVRMVINHGADTIVTSILNIDETNDTVLLDCAPTAIMNQRVLDSNKLSFETVLENIRILFNSPSAESCMYENLPAFVIPLPTSVVRLQRREFYRVPTPLTAPVSCTVPYTTEGVTIEVATTLHNISGGGVSLVDEKKLLSTTIGLTYQNCKIVLPGSGLITVALQVRNVLELTLTNGKSINRIGCEFINPSNGTLATVQKYITKIEREQNAKATGLG.

Positions 123 to 238 (QRREFYRVPT…TLATVQKYIT (116 aa)) constitute a PilZ domain.

This sequence belongs to the YcgR family. As to quaternary structure, monomer. Interacts with the flagellar basal bodies.

It localises to the bacterial flagellum basal body. Acts as a flagellar brake, regulating swimming and swarming in a bis-(3'-5') cyclic diguanylic acid (c-di-GMP)-dependent manner. Binds 1 c-di-GMP dimer per subunit. Increasing levels of c-di-GMP lead to decreased motility. This is Flagellar brake protein YcgR from Janthinobacterium sp. (strain Marseille) (Minibacterium massiliensis).